We begin with the raw amino-acid sequence, 158 residues long: MGVGGTLEYISELIGNGGSHSYGKRKKKKQFQTVELKVRMDCDGCVLKIKNSLSSLKGVKTVEINKKQQKVTVSGYADASKVLKKAKATGKKAEIWPYVPYNLVAQPYIAQAYDKKAPPGYVRKVDPNVTTGTMAVYYDDPSYTSLFSDDNPNACSIM.

The HMA domain occupies 31–94 (FQTVELKVRM…KAKATGKKAE (64 aa)). Positions 42 and 45 each coordinate a metal cation. A Cysteine methyl ester modification is found at C155. C155 carries the S-farnesyl cysteine lipid modification. The propeptide at 156–158 (SIM) is removed in mature form.

Belongs to the HIPP family. As to quaternary structure, interacts with ZHD11/HB29.

In terms of biological role, heavy-metal-binding protein. This is Heavy metal-associated isoprenylated plant protein 23 from Arabidopsis thaliana (Mouse-ear cress).